The sequence spans 427 residues: Transcriptional enhancer factor TEF-3 (427 aa).

Residues 1-32 are disordered; sequence MTSNEWSSPDSPEGSSISGGSQALDKPIDNDA. Low complexity predominate over residues 7–21; sequence SSPDSPEGSSISGGS. Residues 29 to 105 constitute a DNA-binding region (TEA); sequence DNDAEGVWSP…QVLARRKARE (77 aa). The short motif at 78–94 is the Nuclear localization signal element; sequence IKLRTGKTRTRKQVSSH. The segment at 163–206 is disordered; it reads QPGTSHDVKPFSQNTYPVQPPLPLPGFESPAGPTPSPSAPLAPP. Residues 194–205 are compositionally biased toward pro residues; the sequence is GPTPSPSAPLAP.

In terms of assembly, interacts with WWTR1/TAZ. Interacts with YAP1. Preferentially expressed in lung and in skeletal muscle.

It localises to the nucleus. Its function is as follows. Transcription factor which plays a key role in the Hippo signaling pathway, a pathway involved in organ size control and tumor suppression by restricting proliferation and promoting apoptosis. The core of this pathway is composed of a kinase cascade wherein MST1/MST2, in complex with its regulatory protein SAV1, phosphorylates and activates LATS1/2 in complex with its regulatory protein MOB1, which in turn phosphorylates and inactivates YAP1 oncoprotein and WWTR1/TAZ. Acts by mediating gene expression of YAP1 and WWTR1/TAZ, thereby regulating cell proliferation, migration and epithelial mesenchymal transition (EMT) induction. Binds specifically and non-cooperatively to the Sph and GT-IIC 'enhansons' (5'-GTGGAATGT-3') and activates transcription. Binds to the M-CAT motif. Might play a role in the embryonic development of skeletal muscle. The chain is Transcriptional enhancer factor TEF-3 (Tead4) from Mus musculus (Mouse).